The primary structure comprises 488 residues: UDP-N-acetylmuramate--L-alanine ligase (488 aa).

ATP is bound at residue 122-128; the sequence is GTHGKTT.

The protein belongs to the MurCDEF family.

It is found in the cytoplasm. The enzyme catalyses UDP-N-acetyl-alpha-D-muramate + L-alanine + ATP = UDP-N-acetyl-alpha-D-muramoyl-L-alanine + ADP + phosphate + H(+). It participates in cell wall biogenesis; peptidoglycan biosynthesis. Cell wall formation. The polypeptide is UDP-N-acetylmuramate--L-alanine ligase (Mycobacterium ulcerans (strain Agy99)).